The chain runs to 715 residues: Forkhead box protein P2 (715 aa).

Residues 1-28 (MMQESATETISNSSMNQNGMSTLSSQLD) are compositionally biased toward polar residues. Disordered stretches follow at residues 1–46 (MMQE…EVST) and 281–339 (DNGI…TGAS). Over residues 292–305 (TTNNSSSTTSSNTS) the composition is skewed to low complexity. The segment covering 326–337 (ARRDSSSHEETG) has biased composition (basic and acidic residues). The C2H2-type zinc finger occupies 346-371 (GVCKWPGCESICEDFGQFLKHLNNEH). The leucine-zipper stretch occupies residues 388–409 (VQQLEIQLSKERERLQAMMTHL). Residues 422–426 (PLNLV) form a CTBP1-binding region. Residues 438–459 (TSPQSLPQTPTTPTAPVTPITQ) are compositionally biased toward low complexity. Residues 438–465 (TSPQSLPQTPTTPTAPVTPITQGPSVIT) form a disordered region. Positions 504–594 (RPPFTYATLI…SQKITGSPTL (91 aa)) form a DNA-binding region, fork-head. 2 disordered regions span residues 649 to 668 (LDHI…QPHI) and 678 to 715 (VIAE…EDLE). Over residues 699 to 715 (LEDDREIEEEPLSEDLE) the composition is skewed to acidic residues.

Forms homodimers and heterodimers with FOXP1 and FOXP4. Dimerization is required for DNA-binding. Interacts with CTBP1. Interacts with FOXP1. Isoform 1 and isoform 3 interact with TBR1. Interacts with ZMYM2. As to expression, isoform 1 and isoform 6 are expressed in adult and fetal brain, caudate nucleus and lung.

The protein resides in the nucleus. In terms of biological role, transcriptional repressor that may play a role in the specification and differentiation of lung epithelium. May also play a role in developing neural, gastrointestinal and cardiovascular tissues. Can act with CTBP1 to synergistically repress transcription but CTPBP1 is not essential. Plays a role in synapse formation by regulating SRPX2 levels. Involved in neural mechanisms mediating the development of speech and language. The chain is Forkhead box protein P2 (FOXP2) from Homo sapiens (Human).